We begin with the raw amino-acid sequence, 525 residues long: Bifunctional purine biosynthesis protein PurH (525 aa).

Residues 1 to 148 (MPSNNLIKNA…KNYKNVIVIV (148 aa)) enclose the MGS-like domain.

This sequence belongs to the PurH family.

The catalysed reaction is (6R)-10-formyltetrahydrofolate + 5-amino-1-(5-phospho-beta-D-ribosyl)imidazole-4-carboxamide = 5-formamido-1-(5-phospho-D-ribosyl)imidazole-4-carboxamide + (6S)-5,6,7,8-tetrahydrofolate. It carries out the reaction IMP + H2O = 5-formamido-1-(5-phospho-D-ribosyl)imidazole-4-carboxamide. It functions in the pathway purine metabolism; IMP biosynthesis via de novo pathway; 5-formamido-1-(5-phospho-D-ribosyl)imidazole-4-carboxamide from 5-amino-1-(5-phospho-D-ribosyl)imidazole-4-carboxamide (10-formyl THF route): step 1/1. Its pathway is purine metabolism; IMP biosynthesis via de novo pathway; IMP from 5-formamido-1-(5-phospho-D-ribosyl)imidazole-4-carboxamide: step 1/1. In Buchnera aphidicola subsp. Acyrthosiphon pisum (strain 5A), this protein is Bifunctional purine biosynthesis protein PurH.